Consider the following 1730-residue polypeptide: Myosin-7 (1730 aa).

Positions 8-56 (TVGSHVWVEDPDDAWIDGEVEEVNSEEITVNCSGKTVVAKLNNVYPKDP) constitute a Myosin N-terminal SH3-like domain. The 671-residue stretch at 61-731 (LGVDDMTKLA…QMAEMDAHRA (671 aa)) folds into the Myosin motor domain. ATP-binding positions include 155–162 (GESGAGKT) and 208–216 (NNNSSRFGK). Actin-binding stretches follow at residues 494–528 (LIEK…YQTF), 530–553 (NHKR…AGDV), 588–612 (FPPL…KQQL), and 612–634 (LQSL…KPNN). IQ domains follow at residues 757–786 (LQAA…EAAS), 782–811 (REAA…SACS), 831–850 (RRAT…HQRY), and 853–882 (TKKA…AAKE). Positions 883 to 1224 (TGALQDAKTK…VSDMETAEQI (342 aa)) form a coiled coil. The region spanning 1327 to 1678 (DRIVPVFGSA…ISNLKLLLTN (352 aa)) is the Dilute domain. Disordered regions lie at residues 1367–1387 (QSST…FGRM) and 1456–1520 (DSSV…SSEE). Residues 1456 to 1465 (DSSVVNSPSK) are compositionally biased toward low complexity. Residues 1475–1508 (SSEENSPKKSSEENSPKESSGDKSPQKLSDDNSP) show a composition bias toward basic and acidic residues.

The protein belongs to the TRAFAC class myosin-kinesin ATPase superfamily. Myosin family. Plant myosin class XI subfamily. As to quaternary structure, homodimer.

Functionally, myosin heavy chain that is required for the cell cycle-regulated transport of various organelles and proteins for their segregation. Functions by binding with its tail domain to receptor proteins on organelles and exerting force with its N-terminal motor domain against actin filaments, thereby transporting its cargo along polarized actin cables. The sequence is that of Myosin-7 (XI-A) from Arabidopsis thaliana (Mouse-ear cress).